The chain runs to 391 residues: NADH-quinone oxidoreductase subunit D (391 aa).

This sequence belongs to the complex I 49 kDa subunit family. In terms of assembly, NDH-1 is composed of 14 different subunits. Subunits NuoB, C, D, E, F, and G constitute the peripheral sector of the complex.

It is found in the cell inner membrane. The enzyme catalyses a quinone + NADH + 5 H(+)(in) = a quinol + NAD(+) + 4 H(+)(out). Functionally, NDH-1 shuttles electrons from NADH, via FMN and iron-sulfur (Fe-S) centers, to quinones in the respiratory chain. The immediate electron acceptor for the enzyme in this species is believed to be ubiquinone. Couples the redox reaction to proton translocation (for every two electrons transferred, four hydrogen ions are translocated across the cytoplasmic membrane), and thus conserves the redox energy in a proton gradient. This Pelagibacter ubique (strain HTCC1062) protein is NADH-quinone oxidoreductase subunit D.